We begin with the raw amino-acid sequence, 262 residues long: Indole-3-glycerol phosphate synthase (262 aa).

This sequence belongs to the TrpC family.

The catalysed reaction is 1-(2-carboxyphenylamino)-1-deoxy-D-ribulose 5-phosphate + H(+) = (1S,2R)-1-C-(indol-3-yl)glycerol 3-phosphate + CO2 + H2O. It participates in amino-acid biosynthesis; L-tryptophan biosynthesis; L-tryptophan from chorismate: step 4/5. The protein is Indole-3-glycerol phosphate synthase of Bordetella bronchiseptica (strain ATCC BAA-588 / NCTC 13252 / RB50) (Alcaligenes bronchisepticus).